The sequence spans 346 residues: Methylthioribose-1-phosphate isomerase 1 (346 aa).

Residues Arg-48–Ala-50, Arg-91, and Gln-196 contribute to the substrate site. The Proton donor role is filled by Asp-237. Residue Asn-247–Lys-248 participates in substrate binding.

This sequence belongs to the eIF-2B alpha/beta/delta subunits family. MtnA subfamily.

The catalysed reaction is 5-(methylsulfanyl)-alpha-D-ribose 1-phosphate = 5-(methylsulfanyl)-D-ribulose 1-phosphate. The protein operates within amino-acid biosynthesis; L-methionine biosynthesis via salvage pathway; L-methionine from S-methyl-5-thio-alpha-D-ribose 1-phosphate: step 1/6. Catalyzes the interconversion of methylthioribose-1-phosphate (MTR-1-P) into methylthioribulose-1-phosphate (MTRu-1-P). In Pseudothermotoga lettingae (strain ATCC BAA-301 / DSM 14385 / NBRC 107922 / TMO) (Thermotoga lettingae), this protein is Methylthioribose-1-phosphate isomerase 1.